The sequence spans 313 residues: Aspartate carbamoyltransferase catalytic subunit (313 aa).

The carbamoyl phosphate site is built by Arg58 and Thr59. Lys86 contacts L-aspartate. Arg108, His136, and Gln139 together coordinate carbamoyl phosphate. L-aspartate is bound by residues Arg169 and Arg223. Carbamoyl phosphate contacts are provided by Gly264 and Pro265.

Belongs to the aspartate/ornithine carbamoyltransferase superfamily. ATCase family. As to quaternary structure, heterododecamer (2C3:3R2) of six catalytic PyrB chains organized as two trimers (C3), and six regulatory PyrI chains organized as three dimers (R2).

It catalyses the reaction carbamoyl phosphate + L-aspartate = N-carbamoyl-L-aspartate + phosphate + H(+). It functions in the pathway pyrimidine metabolism; UMP biosynthesis via de novo pathway; (S)-dihydroorotate from bicarbonate: step 2/3. Functionally, catalyzes the condensation of carbamoyl phosphate and aspartate to form carbamoyl aspartate and inorganic phosphate, the committed step in the de novo pyrimidine nucleotide biosynthesis pathway. The polypeptide is Aspartate carbamoyltransferase catalytic subunit (Halothermothrix orenii (strain H 168 / OCM 544 / DSM 9562)).